The primary structure comprises 206 residues: Large ribosomal subunit protein mL40 (206 aa).

Residues 1–46 (MATGVMLCAARALRPRSWIPGTCQAHVRHTHQRASLLAFWDLIPMR) constitute a mitochondrion transit peptide. The disordered stretch occupies residues 170–189 (PFEKEGPHYTPPISNYQAPE).

The protein belongs to the mitochondrion-specific ribosomal protein mL40 family. In terms of assembly, component of the mitochondrial ribosome large subunit (39S) which comprises a 16S rRNA and about 50 distinct proteins. Ubiquitous.

Its subcellular location is the mitochondrion. This Mus musculus (Mouse) protein is Large ribosomal subunit protein mL40 (Mrpl40).